The following is a 23-amino-acid chain: Alpha-conotoxin-like RgIB (23 aa).

2 disulfide bridges follow: Cys5–Cys11 and Cys6–Cys19. Positions 7–9 (KNP) are lacks the Ser-Xaa-Pro motif that is crucial for potent interaction with nAChR.

As to expression, expressed by venom duct.

The protein localises to the secreted. In terms of biological role, alpha-conotoxins act on postsynaptic membranes, they bind to the nicotinic acetylcholine receptors (nAChR) and thus inhibit them. Is a specific blocker of the alpha-3-beta-4/CHRNA3-CHRNB4 image nAChR and may also block alpha-3-beta-4-alpha-5 (CHRNA3-CHRNB4-CHRNA5) channels. Has possibly a distinct nAChR binding mode from other alpha-conotoxins, due to a different three residue motif (lacks the Ser-Xaa-Pro motif). In vivo, causes hyperactivity and behavioral disorders in mice following intracranial injection. This Conus regius (Crown cone) protein is Alpha-conotoxin-like RgIB.